Here is a 249-residue protein sequence, read N- to C-terminus: Type III pantothenate kinase (249 aa).

6 to 13 (DCGNSFIK) is an ATP binding site. Substrate-binding positions include Tyr93 and 100–103 (GLDR). Asp102 functions as the Proton acceptor in the catalytic mechanism. Asp122 serves as a coordination point for K(+). Residue Thr125 coordinates ATP. Thr181 contributes to the substrate binding site.

It belongs to the type III pantothenate kinase family. As to quaternary structure, homodimer. NH4(+) is required as a cofactor. Requires K(+) as cofactor.

The protein resides in the cytoplasm. The catalysed reaction is (R)-pantothenate + ATP = (R)-4'-phosphopantothenate + ADP + H(+). The protein operates within cofactor biosynthesis; coenzyme A biosynthesis; CoA from (R)-pantothenate: step 1/5. Functionally, catalyzes the phosphorylation of pantothenate (Pan), the first step in CoA biosynthesis. The polypeptide is Type III pantothenate kinase (Pseudomonas syringae pv. syringae (strain B728a)).